The primary structure comprises 301 residues: Probable actin-related protein 2/3 complex subunit 2 (301 aa).

The protein belongs to the ARPC2 family. In terms of assembly, component of the Arp2/3 complex, at least composed of arx-1, arx-2, arx-4 and arx-6.

The protein localises to the cytoplasm. It is found in the cytoskeleton. Its function is as follows. Functions as actin-binding component of the Arp2/3 complex which is involved in regulation of actin polymerization and together with an activating nucleation-promoting factor (NPF) mediates the formation of branched actin networks. Seems to contact the mother actin filament. Plays a role in time-dependent memory loss and the retention of conditioned behavior over time. The chain is Probable actin-related protein 2/3 complex subunit 2 from Caenorhabditis elegans.